Reading from the N-terminus, the 97-residue chain is Co-chaperonin GroES (97 aa).

The protein belongs to the GroES chaperonin family. In terms of assembly, heptamer of 7 subunits arranged in a ring. Interacts with the chaperonin GroEL.

The protein localises to the cytoplasm. In terms of biological role, together with the chaperonin GroEL, plays an essential role in assisting protein folding. The GroEL-GroES system forms a nano-cage that allows encapsulation of the non-native substrate proteins and provides a physical environment optimized to promote and accelerate protein folding. GroES binds to the apical surface of the GroEL ring, thereby capping the opening of the GroEL channel. The polypeptide is Co-chaperonin GroES (Pseudomonas putida (Arthrobacter siderocapsulatus)).